The primary structure comprises 491 residues: MEKKTKRQETGWNFDNSYARLPESFFSKLLPAPVRAPKLVVLNDSLATSLGLDAEALKSEEGVAVLAGNKVPEGASPLAQAYAGHQFGHFNMLGDGRALLISEQITPSGQRFDIQLKGSGRTPYSRRGDGRAALGPMLREYIISEAMYALGIPTTRSLAVTTTGESIFRETELPGAILTRVASSHIRVGTFQYAAATRSIEDLKSLADYTIKRHFPHIEAHETPYLALLQEVIERQASLIAKWQLVGFIHGVMNTDNMTISGETIDYGPCAFMDTYNPVTVFSSIDMQGRYAYGNQPYIGVWNLARLAESLLPLLHTDIEQAAQIAQNTISKFGPLYEKHWLAGMRAKLGIFNEEATDKELMEELLNTMEKYRADYTNTFLALTFDTNKDTDFFKSEAFTSWHKKWEERLSRQEESKSSSQQLMRDNNPAIIPRNHRVEEALEAAVKQEDYRVMERLLAALSSPYAHSPEQYEYATVPEPSTQPYRTFCGT.

Positions 94, 96, 97, 117, 129, 130, 180, and 187 each coordinate ATP. The active-site Proton acceptor is the aspartate 256. Mg(2+) contacts are provided by asparagine 257 and aspartate 266. Residue aspartate 266 participates in ATP binding.

It belongs to the SELO family. Mg(2+) is required as a cofactor. Requires Mn(2+) as cofactor.

The enzyme catalyses L-seryl-[protein] + ATP = 3-O-(5'-adenylyl)-L-seryl-[protein] + diphosphate. It carries out the reaction L-threonyl-[protein] + ATP = 3-O-(5'-adenylyl)-L-threonyl-[protein] + diphosphate. The catalysed reaction is L-tyrosyl-[protein] + ATP = O-(5'-adenylyl)-L-tyrosyl-[protein] + diphosphate. It catalyses the reaction L-histidyl-[protein] + UTP = N(tele)-(5'-uridylyl)-L-histidyl-[protein] + diphosphate. The enzyme catalyses L-seryl-[protein] + UTP = O-(5'-uridylyl)-L-seryl-[protein] + diphosphate. It carries out the reaction L-tyrosyl-[protein] + UTP = O-(5'-uridylyl)-L-tyrosyl-[protein] + diphosphate. Functionally, nucleotidyltransferase involved in the post-translational modification of proteins. It can catalyze the addition of adenosine monophosphate (AMP) or uridine monophosphate (UMP) to a protein, resulting in modifications known as AMPylation and UMPylation. This is Protein nucleotidyltransferase YdiU from Bacillus cytotoxicus (strain DSM 22905 / CIP 110041 / 391-98 / NVH 391-98).